The primary structure comprises 415 residues: Imidazolonepropionase (415 aa).

Residues His-76 and His-78 each contribute to the Fe(3+) site. Residues His-76 and His-78 each contribute to the Zn(2+) site. Arg-85, Tyr-148, and His-181 together coordinate 4-imidazolone-5-propanoate. Residue Tyr-148 coordinates N-formimidoyl-L-glutamate. Fe(3+) is bound at residue His-246. His-246 provides a ligand contact to Zn(2+). Glu-249 lines the 4-imidazolone-5-propanoate pocket. Position 320 (Asp-320) interacts with Fe(3+). Asp-320 is a binding site for Zn(2+). Asn-322 and Gly-324 together coordinate N-formimidoyl-L-glutamate. Thr-325 contributes to the 4-imidazolone-5-propanoate binding site.

This sequence belongs to the metallo-dependent hydrolases superfamily. HutI family. It depends on Zn(2+) as a cofactor. Requires Fe(3+) as cofactor.

The protein resides in the cytoplasm. It carries out the reaction 4-imidazolone-5-propanoate + H2O = N-formimidoyl-L-glutamate. Its pathway is amino-acid degradation; L-histidine degradation into L-glutamate; N-formimidoyl-L-glutamate from L-histidine: step 3/3. Its function is as follows. Catalyzes the hydrolytic cleavage of the carbon-nitrogen bond in imidazolone-5-propanoate to yield N-formimidoyl-L-glutamate. It is the third step in the universal histidine degradation pathway. The protein is Imidazolonepropionase of Caldanaerobacter subterraneus subsp. tengcongensis (strain DSM 15242 / JCM 11007 / NBRC 100824 / MB4) (Thermoanaerobacter tengcongensis).